The following is a 117-amino-acid chain: MHELTLCQRAIEIIEQQAQQHGAKKVTAVWLEIGAFSCVETSSLDFCFGMVCRRTLAEGCQLHLHQQEAECWCYDCQQSVTLLTIQVRRCPQCQGDNLRIVADDGIQLKRMEIEQEI.

Histidine 2 lines the Ni(2+) pocket. Zn(2+)-binding residues include cysteine 73, cysteine 76, cysteine 90, and cysteine 93.

The protein belongs to the HypA/HybF family.

Its function is as follows. Involved in the maturation of [NiFe] hydrogenases. Required for nickel insertion into the metal center of the hydrogenase. In Pectobacterium atrosepticum (strain SCRI 1043 / ATCC BAA-672) (Erwinia carotovora subsp. atroseptica), this protein is Hydrogenase maturation factor HypA.